Consider the following 227-residue polypeptide: ATP synthase F(0) complex subunit a (227 aa).

The next 6 helical transmembrane spans lie at 14–34 (LLGI…LPSP), 69–89 (WALI…LGLL), 98–118 (QLSM…LTGL), 139–159 (IPAL…ALGV), 174–194 (LIST…VLTA), and 196–216 (VLLL…YVFV).

The protein belongs to the ATPase A chain family. Component of the ATP synthase complex composed at least of ATP5F1A/subunit alpha, ATP5F1B/subunit beta, ATP5MC1/subunit c (homooctomer), MT-ATP6/subunit a, MT-ATP8/subunit 8, ATP5ME/subunit e, ATP5MF/subunit f, ATP5MG/subunit g, ATP5MK/subunit k, ATP5MJ/subunit j, ATP5F1C/subunit gamma, ATP5F1D/subunit delta, ATP5F1E/subunit epsilon, ATP5PF/subunit F6, ATP5PB/subunit b, ATP5PD/subunit d, ATP5PO/subunit OSCP. ATP synthase complex consists of a soluble F(1) head domain (subunits alpha(3) and beta(3)) - the catalytic core - and a membrane F(0) domain - the membrane proton channel (subunits c, a, 8, e, f, g, k and j). These two domains are linked by a central stalk (subunits gamma, delta, and epsilon) rotating inside the F1 region and a stationary peripheral stalk (subunits F6, b, d, and OSCP). Interacts with DNAJC30; interaction is direct.

The protein resides in the mitochondrion inner membrane. The catalysed reaction is H(+)(in) = H(+)(out). Subunit a, of the mitochondrial membrane ATP synthase complex (F(1)F(0) ATP synthase or Complex V) that produces ATP from ADP in the presence of a proton gradient across the membrane which is generated by electron transport complexes of the respiratory chain. ATP synthase complex consist of a soluble F(1) head domain - the catalytic core - and a membrane F(1) domain - the membrane proton channel. These two domains are linked by a central stalk rotating inside the F(1) region and a stationary peripheral stalk. During catalysis, ATP synthesis in the catalytic domain of F(1) is coupled via a rotary mechanism of the central stalk subunits to proton translocation. With the subunit c (ATP5MC1), forms the proton-conducting channel in the F(0) domain, that contains two crucial half-channels (inlet and outlet) that facilitate proton movement from the mitochondrial intermembrane space (IMS) into the matrix. Protons are taken up via the inlet half-channel and released through the outlet half-channel, following a Grotthuss mechanism. The sequence is that of ATP synthase F(0) complex subunit a from Struthio camelus (Common ostrich).